Consider the following 145-residue polypeptide: 3-hydroxyacyl-[acyl-carrier-protein] dehydratase FabZ (145 aa).

Histidine 51 is an active-site residue.

It belongs to the thioester dehydratase family. FabZ subfamily.

It is found in the cytoplasm. It catalyses the reaction a (3R)-hydroxyacyl-[ACP] = a (2E)-enoyl-[ACP] + H2O. Involved in unsaturated fatty acids biosynthesis. Catalyzes the dehydration of short chain beta-hydroxyacyl-ACPs and long chain saturated and unsaturated beta-hydroxyacyl-ACPs. This chain is 3-hydroxyacyl-[acyl-carrier-protein] dehydratase FabZ, found in Staphylococcus saprophyticus subsp. saprophyticus (strain ATCC 15305 / DSM 20229 / NCIMB 8711 / NCTC 7292 / S-41).